The sequence spans 316 residues: Ribosomal RNA small subunit methyltransferase H (316 aa).

Residues 35 to 37 (AGH), aspartate 55, phenylalanine 84, aspartate 105, and glutamine 112 contribute to the S-adenosyl-L-methionine site.

Belongs to the methyltransferase superfamily. RsmH family.

It localises to the cytoplasm. It catalyses the reaction cytidine(1402) in 16S rRNA + S-adenosyl-L-methionine = N(4)-methylcytidine(1402) in 16S rRNA + S-adenosyl-L-homocysteine + H(+). Functionally, specifically methylates the N4 position of cytidine in position 1402 (C1402) of 16S rRNA. The sequence is that of Ribosomal RNA small subunit methyltransferase H from Streptococcus thermophilus (strain ATCC BAA-250 / LMG 18311).